A 417-amino-acid polypeptide reads, in one-letter code: uncharacterized protein (417 aa).

It belongs to the MG032/MG096/MG288 family.

This is an uncharacterized protein from Mycoplasma pneumoniae (strain ATCC 29342 / M129 / Subtype 1) (Mycoplasmoides pneumoniae).